A 1107-amino-acid chain; its full sequence is Lon protease homolog, mitochondrial (1107 aa).

The transit peptide at 1–31 directs the protein to the mitochondrion; the sequence is MLSRQRIPRILASRTSLAHSIRSFTSTTSSI. Disordered regions lie at residues 32–152 and 273–329; these read RPVA…PGDK and PEAA…PYEP. A compositionally biased stretch (polar residues) spans 51 to 60; it reads TNLSSFSTYT. Basic and acidic residues predominate over residues 80–101; it reads EEERKANVEHAEAEAKEAESKQ. Positions 122–141 are enriched in gly residues; sequence GAAGGSSAGSGSGADGGSGD. Positions 142–152 are enriched in basic and acidic residues; that stretch reads GGKRGRKPGDK. Positions 166-441 constitute a Lon N-terminal domain; the sequence is VMAIPIAKRP…KALLVLKKEH (276 aa). Position 594–601 (594–601) interacts with ATP; the sequence is GPPGVGKT. The disordered stretch occupies residues 808 to 858; the sequence is PESEALTEEGKAAQEETEKKKSEEAASGETSSPKAATEASEKETTEKPRVA. Residues 815–831 are compositionally biased toward basic and acidic residues; the sequence is EEGKAAQEETEKKKSEE. Residues 832-845 are compositionally biased toward low complexity; it reads AASGETSSPKAATE. Residues 846 to 856 show a composition bias toward basic and acidic residues; sequence ASEKETTEKPR. In terms of domain architecture, Lon proteolytic spans 891–1077; the sequence is VTPPGVTMGL…SEVFDLIFPK (187 aa). Catalysis depends on residues Ser-983 and Lys-1026. A disordered region spans residues 1085 to 1107; that stretch reads KSRIIEDDKSEKEESKKKNDDDE.

The protein belongs to the peptidase S16 family. In terms of assembly, homohexamer or homoheptamer. Organized in a ring with a central cavity.

Its subcellular location is the mitochondrion matrix. The catalysed reaction is Hydrolysis of proteins in presence of ATP.. Its function is as follows. ATP-dependent serine protease that mediates the selective degradation of misfolded, unassembled or oxidatively damaged polypeptides as well as certain short-lived regulatory proteins in the mitochondrial matrix. May also have a chaperone function in the assembly of inner membrane protein complexes. Participates in the regulation of mitochondrial gene expression and in the maintenance of the integrity of the mitochondrial genome. Binds to mitochondrial DNA in a site-specific manner. This is Lon protease homolog, mitochondrial (pim1) from Neurospora crassa (strain ATCC 24698 / 74-OR23-1A / CBS 708.71 / DSM 1257 / FGSC 987).